The sequence spans 128 residues: Sulfurtransferase TusD (128 aa).

Catalysis depends on cysteine 78, which acts as the Cysteine persulfide intermediate.

This sequence belongs to the DsrE/TusD family. In terms of assembly, heterohexamer, formed by a dimer of trimers. The hexameric TusBCD complex contains 2 copies each of TusB, TusC and TusD. The TusBCD complex interacts with TusE.

It localises to the cytoplasm. Functionally, part of a sulfur-relay system required for 2-thiolation of 5-methylaminomethyl-2-thiouridine (mnm(5)s(2)U) at tRNA wobble positions. Accepts sulfur from TusA and transfers it in turn to TusE. In Escherichia coli O139:H28 (strain E24377A / ETEC), this protein is Sulfurtransferase TusD.